The chain runs to 361 residues: Aminomethyltransferase (361 aa).

Belongs to the GcvT family. The glycine cleavage system is composed of four proteins: P, T, L and H.

It catalyses the reaction N(6)-[(R)-S(8)-aminomethyldihydrolipoyl]-L-lysyl-[protein] + (6S)-5,6,7,8-tetrahydrofolate = N(6)-[(R)-dihydrolipoyl]-L-lysyl-[protein] + (6R)-5,10-methylene-5,6,7,8-tetrahydrofolate + NH4(+). Functionally, the glycine cleavage system catalyzes the degradation of glycine. The polypeptide is Aminomethyltransferase (Herpetosiphon aurantiacus (strain ATCC 23779 / DSM 785 / 114-95)).